A 720-amino-acid chain; its full sequence is Denticleless protein homolog (720 aa).

3 WD repeats span residues 43 to 85 (GMPV…TTKL), 92 to 131 (AHSN…LLGI), and 134 to 174 (GHQC…KDGF). The DDB1-binding motif signature appears at 164 to 167 (WDTR). The Nuclear localization signal signature appears at 193–200 (PSKLRKKR). WD repeat units follow at residues 211–250 (DFQQ…AAYR), 266–305 (TRKL…TFPV), 310–351 (GHQN…LPPR), and 355–395 (GHSQ…EEEK). The DDB1-binding motif signature appears at 240-243 (WDLR). 4 disordered regions span residues 411–437 (KPEE…VGSP), 476–495 (PAKL…PSSK), 528–552 (QSLL…KRRL), and 607–698 (NEHE…TSPK). Positions 528 to 542 (QSLLETSSTPKAQHS) are enriched in polar residues. Basic and acidic residues-rich tracts occupy residues 543-552 (QAEKRAKRRL) and 642-660 (CERD…ERKN).

The protein belongs to the WD repeat cdt2 family. As to quaternary structure, component of the DCX(DTL) E3 ubiquitin ligase complex, at least composed of CUL4 (CUL4A or CUL4B), DDB1, DTL/CDT2 and RBX1.

It localises to the nucleus. It is found in the cytoplasm. The protein localises to the cytoskeleton. The protein resides in the microtubule organizing center. Its subcellular location is the centrosome. It localises to the chromosome. The protein operates within protein modification; protein ubiquitination. Functionally, substrate-specific adapter of a DCX (DDB1-CUL4-X-box) E3 ubiquitin-protein ligase complex required for cell cycle control, DNA damage response and translesion DNA synthesis. The DCX(DTL) complex, also named CRL4(CDT2) complex, mediates the polyubiquitination and subsequent degradation of CDT1, CDKN1A/p21(CIP1), KMT5A and SDE2. CDT1 degradation in response to DNA damage is necessary to ensure proper cell cycle regulation of DNA replication. CDKN1A/p21(CIP1) degradation during S phase or following UV irradiation is essential to control replication licensing. KMT5A degradation is also important for a proper regulation of mechanisms such as TGF-beta signaling, cell cycle progression, DNA repair and cell migration. Most substrates require their interaction with PCNA for their polyubiquitination: substrates interact with PCNA via their PIP-box, and those containing the 'K+4' motif in the PIP box, recruit the DCX(DTL) complex, leading to their degradation. In undamaged proliferating cells, the DCX(DTL) complex also promotes the 'Lys-164' monoubiquitination of PCNA, thereby being involved in PCNA-dependent translesion DNA synthesis. May play a role in the regulation of the circadian clock. This Gallus gallus (Chicken) protein is Denticleless protein homolog (DTL).